A 480-amino-acid chain; its full sequence is Islet cell autoantigen 1 (480 aa).

The region spanning Ala-50–Glu-253 is the AH domain. Basic and acidic residues-rich tracts occupy residues Leu-276 to Val-293 and Glu-306 to Lys-321. Disordered stretches follow at residues Leu-276–Gly-338 and Leu-400–Ala-421.

It localises to the cytoplasm. The protein localises to the cytosol. It is found in the golgi apparatus membrane. The protein resides in the cytoplasmic vesicle. Its subcellular location is the secretory vesicle membrane. It localises to the secretory vesicle. The protein localises to the synaptic vesicle membrane. Its function is as follows. May play a role in neurotransmitter secretion. This is Islet cell autoantigen 1 from Rattus norvegicus (Rat).